We begin with the raw amino-acid sequence, 399 residues long: L-asparaginase-like protein GE13669 (399 aa).

Positions 1–22 are cleaved as a signal peptide; it reads MLAQSCCLRLLILLLLFKSTCS. Disulfide bonds link cysteine 90/cysteine 95, cysteine 189/cysteine 205, and cysteine 344/cysteine 371.

Belongs to the Ntn-hydrolase family.

The sequence is that of L-asparaginase-like protein GE13669 from Drosophila yakuba (Fruit fly).